Consider the following 219-residue polypeptide: Adenylate kinase (219 aa).

10–15 serves as a coordination point for ATP; sequence GAGKGT. The NMP stretch occupies residues 30-59; sequence STGDMLRAAVKAGTPLGQQAKKVMDAGELV. AMP is bound by residues Thr-31, Arg-36, 57–59, 85–88, and Gln-92; these read ELV and GFPR. Positions 122–159 are LID; sequence GRRVHPGSGRVYHVEHNPPKEEGKDDVTGEPLVQRDDD. Residues Arg-123 and 132-133 each bind ATP; that span reads VY. Residues 129–152 form a disordered region; sequence SGRVYHVEHNPPKEEGKDDVTGEP. Over residues 133–152 the composition is skewed to basic and acidic residues; that stretch reads YHVEHNPPKEEGKDDVTGEP. Residues Arg-156 and Arg-167 each contribute to the AMP site. Position 203 (Gly-203) interacts with ATP.

Belongs to the adenylate kinase family. In terms of assembly, monomer.

The protein resides in the cytoplasm. It carries out the reaction AMP + ATP = 2 ADP. Its pathway is purine metabolism; AMP biosynthesis via salvage pathway; AMP from ADP: step 1/1. In terms of biological role, catalyzes the reversible transfer of the terminal phosphate group between ATP and AMP. Plays an important role in cellular energy homeostasis and in adenine nucleotide metabolism. The sequence is that of Adenylate kinase from Alkalilimnicola ehrlichii (strain ATCC BAA-1101 / DSM 17681 / MLHE-1).